A 363-amino-acid polypeptide reads, in one-letter code: Translocating chain-associated membrane protein 1-like 1 (363 aa).

At 1 to 29 (MGLRKKNARNPPVLSHEFMVQNHADMVSC) the chain is on the cytoplasmic side. A helical membrane pass occupies residues 30 to 50 (VGMFFVLGLMFEGTSEMSIAF). Topologically, residues 51–80 (LTLQHGVVVPAEGLPSGSRTLYHYGVKDLA) are lumenal. Residues 81–101 (TVFFYMLVAIIIHATIQEYVL) traverse the membrane as a helical segment. Residues 102-120 (DKLSRRLQLTKGKQNKLNE) are Cytoplasmic-facing. The TLC domain occupies 116 to 324 (NKLNEAGQLS…TVWLQRWLED (209 aa)). Residues 121–141 (AGQLSVFYIVSGIWGMIILAS) traverse the membrane as a helical segment. Residues 142-159 (ENCLSDPTLLWKSQPHNM) are Lumenal-facing. A helical transmembrane segment spans residues 160 to 179 (MTFQMKFFYISQLAYWFHSF). The Cytoplasmic segment spans residues 180–191 (PELYFQKVRKQD). Residues 192-214 (IPGQLIYIGLHLFHIGGAYLLYL) traverse the membrane as a helical segment. Topologically, residues 215-218 (NHLG) are lumenal. The helical transmembrane segment at 219–241 (LLLLMLHYAVELLSSVCSLLYFG) threads the bilayer. At 242-250 (DERYQKGLS) the chain is on the cytoplasmic side. Residues 251 to 271 (LWPIVFISGRLVTLIVSVVTV) form a helical membrane-spanning segment. Residues 272–295 (GLHLAGTNRNGNALSGNVNVLAAK) lie on the Lumenal side of the membrane. Residues 296-316 (IAVLSSSCSIQVYITWTLTTV) form a helical membrane-spanning segment. Residues 317-363 (WLQRWLEDANLHVCGRKRRSRARKGTENGVENPNRIDSPPKKKEKAP) lie on the Cytoplasmic side of the membrane. The disordered stretch occupies residues 338 to 363 (ARKGTENGVENPNRIDSPPKKKEKAP). The span at 354-363 (SPPKKKEKAP) shows a compositional bias: basic and acidic residues.

The protein belongs to the TRAM family.

The protein resides in the endoplasmic reticulum membrane. Functionally, stimulatory or required for the translocation of secretory proteins across the ER membrane. The sequence is that of Translocating chain-associated membrane protein 1-like 1 (Tram1l1) from Mus musculus (Mouse).